The chain runs to 176 residues: Isopentenyl-diphosphate Delta-isomerase (176 aa).

Mn(2+) contacts are provided by H22 and H28. Positions 26–160 constitute a Nudix hydrolase domain; it reads LRHKAVSVFV…PDRYTPWLRI (135 aa). C62 is a catalytic residue. H64 lines the Mn(2+) pocket. E82 contacts Mg(2+). The Mn(2+) site is built by E108 and E110. E110 is a catalytic residue.

This sequence belongs to the IPP isomerase type 1 family. Mg(2+) serves as cofactor. Mn(2+) is required as a cofactor.

It is found in the cytoplasm. The enzyme catalyses isopentenyl diphosphate = dimethylallyl diphosphate. It functions in the pathway isoprenoid biosynthesis; dimethylallyl diphosphate biosynthesis; dimethylallyl diphosphate from isopentenyl diphosphate: step 1/1. The protein operates within porphyrin-containing compound metabolism; chlorophyll biosynthesis. Functionally, catalyzes the 1,3-allylic rearrangement of the homoallylic substrate isopentenyl (IPP) to its highly electrophilic allylic isomer, dimethylallyl diphosphate (DMAPP). This Roseobacter denitrificans (strain ATCC 33942 / OCh 114) (Erythrobacter sp. (strain OCh 114)) protein is Isopentenyl-diphosphate Delta-isomerase.